An 844-amino-acid polypeptide reads, in one-letter code: E3 ubiquitin-protein ligase BRE1-like 2 (844 aa).

2 coiled-coil regions span residues 1 to 38 (MDAA…RDEQ) and 160 to 240 (EDVI…QLQT). Residues 244-269 (SLMNTSAPNGVNGSVSTDKSSDKGMG) are disordered. Positions 245–261 (LMNTSAPNGVNGSVSTD) are enriched in polar residues. Coiled coils occupy residues 290 to 604 (ELHE…SEIE) and 640 to 670 (KMKQ…ESSK). The RING-type zinc-finger motif lies at 792-831 (CGVCFDRPKEVVITKCFHLFCSPCIQRNLEIRHRKCPGCG).

This sequence belongs to the BRE1 family.

It is found in the nucleus. The enzyme catalyses S-ubiquitinyl-[E2 ubiquitin-conjugating enzyme]-L-cysteine + [acceptor protein]-L-lysine = [E2 ubiquitin-conjugating enzyme]-L-cysteine + N(6)-ubiquitinyl-[acceptor protein]-L-lysine.. Its pathway is protein modification; protein ubiquitination. E3 ubiquitin-protein ligase that monoubiquitinates H2B to form H2BK143ub1. H2BK143ub1 gives a specific tag for epigenetic transcriptional activation and is also prerequisite for H3K4me and maybe H3K79me. It thereby plays a central role in histone code and gene regulation. Forms a ubiquitin ligase complex in cooperation with the E2 enzyme UBC2/RAD6. This is E3 ubiquitin-protein ligase BRE1-like 2 (BRE1B) from Oryza sativa subsp. indica (Rice).